The chain runs to 1167 residues: White collar 1 protein (1167 aa).

Disordered regions lie at residues 1–91 (MNNN…MSGG) and 307–355 (STPA…GASQ). A compositionally biased stretch (low complexity) spans 21 to 57 (QHQQQQQQQQQQQQQQQQQQQQQQQQQQQQHQHQQQQ). Composition is skewed to polar residues over residues 70–91 (TPPTTNQGNSTIHASDVTMSGG) and 307–325 (STPATTFQSPSLSATTQTI). Positions 335–348 (VTNAPTPAPFTSTP) are enriched in low complexity. The region spanning 381-452 (KLKLGAVDMS…KREFVENNAV (72 aa)) is the PAS 1 domain. Cysteine 428 carries the post-translational modification S-4a-FMN cysteine. The 40-residue stretch at 469-508 (LINYRKGGKPFLNLLTMIPIPWDTEEIRYFIGFQIDLVEC) folds into the PAC 1 domain. The 71-residue stretch at 574–644 (KQSWDKMLLE…RELKEAQQHT (71 aa)) folds into the PAS 2 domain. The PAC 2 domain maps to 650-691 (FRIRRKNSGYTWFESHGTLFNEQGKGRKCIILVGRKRPVFAL). The region spanning 693–763 (RKDLELNGGI…RTIEKARKGK (71 aa)) is the PAS 3 domain. Residues 849–861 (MSKSGSSDSTGAM) are compositionally biased toward low complexity. 4 disordered regions span residues 849–872 (MSKSGSSDSTGAMVSARSSAGPGQ), 918–952 (KKKRKRRKGGGNMVRDCANCHTRNTPEWRRGPSGN), 966–1047 (QTGR…TGST), and 1060–1167 (VNAL…GLSV). Residues 934 to 959 (CANCHTRNTPEWRRGPSGNRDLCNSC) form a GATA-type zinc finger. Over residues 968–977 (GRVSPRTSSR) the composition is skewed to polar residues. The segment covering 986-995 (KKSNSPSHSS) has biased composition (low complexity). Polar residues predominate over residues 1004 to 1033 (DSPSTTTATKNSPSLRGSSTTAPGTITTDS). Low complexity-rich tracts occupy residues 1036–1047 (AVASSASGTGST) and 1104–1128 (QHQQQHQQQHQQQHQQQHQQLQQHQ).

In terms of assembly, heterodimer of wc-1 and wc-2. FMN binds covalently to cysteine after exposure to blue light and is reversed in the dark.

It localises to the nucleus. Functionally, may function as a transcription factor involved in light regulation. Binds and affects blue light regulation of the al-3 gene. Wc-1 and wc-2 proteins interact via homologous PAS domains, bind to promoters of light regulated genes such as frq, and activate transcription. The chain is White collar 1 protein (wc-1) from Neurospora crassa (strain ATCC 24698 / 74-OR23-1A / CBS 708.71 / DSM 1257 / FGSC 987).